The chain runs to 599 residues: 2-succinyl-5-enolpyruvyl-6-hydroxy-3-cyclohexene-1-carboxylate synthase (599 aa).

A compositionally biased stretch (low complexity) spans 1–21 (MTSENPLDPNNAYAAADDAPL). Residues 1–35 (MTSENPLDPNNAYAAADDAPLSEGDPTGAPADSGS) are disordered.

Belongs to the TPP enzyme family. MenD subfamily. In terms of assembly, homodimer. Requires Mg(2+) as cofactor. Mn(2+) is required as a cofactor. Thiamine diphosphate serves as cofactor.

It carries out the reaction isochorismate + 2-oxoglutarate + H(+) = 5-enolpyruvoyl-6-hydroxy-2-succinyl-cyclohex-3-ene-1-carboxylate + CO2. The protein operates within quinol/quinone metabolism; 1,4-dihydroxy-2-naphthoate biosynthesis; 1,4-dihydroxy-2-naphthoate from chorismate: step 2/7. It participates in quinol/quinone metabolism; menaquinone biosynthesis. Its function is as follows. Catalyzes the thiamine diphosphate-dependent decarboxylation of 2-oxoglutarate and the subsequent addition of the resulting succinic semialdehyde-thiamine pyrophosphate anion to isochorismate to yield 2-succinyl-5-enolpyruvyl-6-hydroxy-3-cyclohexene-1-carboxylate (SEPHCHC). This chain is 2-succinyl-5-enolpyruvyl-6-hydroxy-3-cyclohexene-1-carboxylate synthase, found in Arthrobacter sp. (strain FB24).